The chain runs to 467 residues: Asparagine--tRNA ligase (467 aa).

The protein belongs to the class-II aminoacyl-tRNA synthetase family. In terms of assembly, homodimer.

The protein localises to the cytoplasm. It catalyses the reaction tRNA(Asn) + L-asparagine + ATP = L-asparaginyl-tRNA(Asn) + AMP + diphosphate + H(+). The protein is Asparagine--tRNA ligase of Legionella pneumophila (strain Paris).